Here is a 431-residue protein sequence, read N- to C-terminus: Adenylosuccinate synthetase 2 (431 aa).

GTP is bound by residues 13-19 (GDEGKGK) and 41-43 (GHT). Asp-14 functions as the Proton acceptor in the catalytic mechanism. Mg(2+)-binding residues include Asp-14 and Gly-41. IMP is bound by residues 14-17 (DEGK), 39-42 (NAGH), Thr-130, Arg-144, Gln-225, Thr-240, and Arg-304. Residue His-42 is the Proton donor of the active site. Residue 300-306 (SVTGRPR) coordinates substrate. GTP contacts are provided by residues Arg-306, 332–334 (KLD), and 414–416 (STG).

This sequence belongs to the adenylosuccinate synthetase family. As to quaternary structure, homodimer. Mg(2+) is required as a cofactor.

The protein localises to the cytoplasm. The catalysed reaction is IMP + L-aspartate + GTP = N(6)-(1,2-dicarboxyethyl)-AMP + GDP + phosphate + 2 H(+). Its pathway is purine metabolism; AMP biosynthesis via de novo pathway; AMP from IMP: step 1/2. Functionally, plays an important role in the de novo pathway of purine nucleotide biosynthesis. Catalyzes the first committed step in the biosynthesis of AMP from IMP. The chain is Adenylosuccinate synthetase 2 from Chromobacterium violaceum (strain ATCC 12472 / DSM 30191 / JCM 1249 / CCUG 213 / NBRC 12614 / NCIMB 9131 / NCTC 9757 / MK).